Here is a 138-residue protein sequence, read N- to C-terminus: Superoxide dismutase [Mn] (138 aa).

The Mn(2+) site is built by His-1, His-49, Asp-133, and His-137.

Belongs to the iron/manganese superoxide dismutase family. It depends on Mn(2+) as a cofactor.

The enzyme catalyses 2 superoxide + 2 H(+) = H2O2 + O2. Its function is as follows. Destroys superoxide anion radicals which are normally produced within the cells and which are toxic to biological systems. This is Superoxide dismutase [Mn] (sodA) from Mycobacterium celatum.